Reading from the N-terminus, the 236-residue chain is MADS-box transcription factor 3 (236 aa).

Residues 1 to 61 (MGRGKIEIKR…GRLYEYANNS (61 aa)) form the MADS-box domain. The 92-residue stretch at 87–178 (AQHYQQESSK…RSKVVENERG (92 aa)) folds into the K-box domain.

Expressed in lemmas, paleas and lodicules.

It is found in the nucleus. Functionally, probable transcription factor involved in the development of floral organs. Acts as C-class protein in association with MADS58. Involved in the control of lodicule number (whorl 2), stamen specification (whorl 3) and floral meristem determinacy (whorl 4), but not in the regulation of carpel morphogenesis. Plays a more predominant role in controlling lodicule development and in specifying stamen identity than MADS58. The polypeptide is MADS-box transcription factor 3 (MADS3) (Oryza sativa subsp. japonica (Rice)).